The following is a 621-amino-acid chain: 2-hydroxyacyl-CoA lyase 2 (621 aa).

Residues leucine 7–tyrosine 29 traverse the membrane as a helical segment. Glutamate 87 serves as a coordination point for thiamine diphosphate. The tract at residues aspartate 459–cysteine 539 is thiamine pyrophosphate binding. Residues aspartate 510 and asparagine 536 each coordinate Mg(2+).

It belongs to the TPP enzyme family. It depends on Mg(2+) as a cofactor. The cofactor is thiamine diphosphate.

The protein resides in the endoplasmic reticulum membrane. It catalyses the reaction 2-hydroxyoctadecanoyl-CoA = heptadecanal + formyl-CoA. It carries out the reaction (2R)-hydroxyhexadecanoyl-CoA = pentadecanal + formyl-CoA. Its function is as follows. Endoplasmic reticulum 2-OH acyl-CoA lyase involved in the cleavage (C1 removal) reaction in the fatty acid alpha-oxydation in a thiamine pyrophosphate (TPP)-dependent manner. This is 2-hydroxyacyl-CoA lyase 2 (ilvbl) from Danio rerio (Zebrafish).